A 404-amino-acid polypeptide reads, in one-letter code: L-cysteine:1D-myo-inositol 2-amino-2-deoxy-alpha-D-glucopyranoside ligase 1 (404 aa).

Cysteine 47 is a binding site for Zn(2+). L-cysteinyl-5'-AMP-binding positions include 47–50 (CGIT), threonine 62, and 85–87 (NIT). Positions 49–59 (ITPYDSTHLGH) match the 'HIGH' region motif. Positions 188–193 (ERGGDP) match the 'ERGGDP' region motif. An L-cysteinyl-5'-AMP-binding site is contributed by tryptophan 228. Cysteine 232 contacts Zn(2+). 250 to 252 (GSD) serves as a coordination point for L-cysteinyl-5'-AMP. A Zn(2+)-binding site is contributed by histidine 257. Isoleucine 284 serves as a coordination point for L-cysteinyl-5'-AMP. A 'KMSKS' region motif is present at residues 290-294 (KMSKS).

Belongs to the class-I aminoacyl-tRNA synthetase family. MshC subfamily. As to quaternary structure, monomer. Requires Zn(2+) as cofactor.

It carries out the reaction 1D-myo-inositol 2-amino-2-deoxy-alpha-D-glucopyranoside + L-cysteine + ATP = 1D-myo-inositol 2-(L-cysteinylamino)-2-deoxy-alpha-D-glucopyranoside + AMP + diphosphate + H(+). Its function is as follows. Catalyzes the ATP-dependent condensation of GlcN-Ins and L-cysteine to form L-Cys-GlcN-Ins. In Corynebacterium urealyticum (strain ATCC 43042 / DSM 7109), this protein is L-cysteine:1D-myo-inositol 2-amino-2-deoxy-alpha-D-glucopyranoside ligase 1.